A 287-amino-acid polypeptide reads, in one-letter code: ATP synthase gamma chain (287 aa).

This sequence belongs to the ATPase gamma chain family. F-type ATPases have 2 components, CF(1) - the catalytic core - and CF(0) - the membrane proton channel. CF(1) has five subunits: alpha(3), beta(3), gamma(1), delta(1), epsilon(1). CF(0) has three main subunits: a, b and c.

It localises to the cell inner membrane. Functionally, produces ATP from ADP in the presence of a proton gradient across the membrane. The gamma chain is believed to be important in regulating ATPase activity and the flow of protons through the CF(0) complex. The polypeptide is ATP synthase gamma chain (Ruthia magnifica subsp. Calyptogena magnifica).